Consider the following 311-residue polypeptide: GTPase Era (311 aa).

Residues 16 to 188 (HAGFVAIVGK…REQLLEVLPE (173 aa)) enclose the Era-type G domain. Residues 24-31 (GKPNVGKS) form a G1 region. Position 24–31 (24–31 (GKPNVGKS)) interacts with GTP. The interval 50–54 (QTTRR) is G2. Residues 71–74 (DTPG) are G3. Residues 71–75 (DTPGL) and 133–136 (NKTD) each bind GTP. The segment at 133–136 (NKTD) is G4. The G5 stretch occupies residues 166 to 168 (LSA). A KH type-2 domain is found at 219–296 (LRDELPYAVA…YLGLEVIVIP (78 aa)).

This sequence belongs to the TRAFAC class TrmE-Era-EngA-EngB-Septin-like GTPase superfamily. Era GTPase family. In terms of assembly, monomer.

It localises to the cytoplasm. It is found in the cell membrane. Functionally, an essential GTPase that binds both GDP and GTP, with rapid nucleotide exchange. Plays a role in 16S rRNA processing and 30S ribosomal subunit biogenesis and possibly also in cell cycle regulation and energy metabolism. The protein is GTPase Era of Deinococcus radiodurans (strain ATCC 13939 / DSM 20539 / JCM 16871 / CCUG 27074 / LMG 4051 / NBRC 15346 / NCIMB 9279 / VKM B-1422 / R1).